The following is a 380-amino-acid chain: Crotonobetainyl-CoA reductase (380 aa).

Belongs to the acyl-CoA dehydrogenase family. As to quaternary structure, homotetramer. Requires FAD as cofactor.

The protein localises to the cytoplasm. The catalysed reaction is 4-(trimethylamino)butanoyl-CoA + oxidized [electron-transfer flavoprotein] + H(+) = crotonobetainyl-CoA + reduced [electron-transfer flavoprotein]. It participates in amine and polyamine metabolism; carnitine metabolism. In terms of biological role, catalyzes the reduction of crotonobetainyl-CoA to gamma-butyrobetainyl-CoA. The sequence is that of Crotonobetainyl-CoA reductase from Escherichia coli (strain UTI89 / UPEC).